The sequence spans 157 residues: Dihydrofolate reductase type 15 (157 aa).

The DHFR domain occupies 2–156 (KLSLMAAISK…INYSYQIWQK (155 aa)).

Belongs to the dihydrofolate reductase family. As to quaternary structure, homodimer.

The enzyme catalyses (6S)-5,6,7,8-tetrahydrofolate + NADP(+) = 7,8-dihydrofolate + NADPH + H(+). The protein operates within cofactor biosynthesis; tetrahydrofolate biosynthesis; 5,6,7,8-tetrahydrofolate from 7,8-dihydrofolate: step 1/1. Functionally, key enzyme in folate metabolism. Catalyzes an essential reaction for de novo glycine and purine synthesis, and for DNA precursor synthesis. This chain is Dihydrofolate reductase type 15 (dhfrXV), found in Escherichia coli.